The following is a 220-amino-acid chain: Chalcone--flavanone isomerase B (220 aa).

Substrate-binding residues include Thr50, Asn115, and Thr192.

The protein belongs to the chalcone isomerase family.

It carries out the reaction a chalcone = a flavanone.. It participates in secondary metabolite biosynthesis; flavonoid biosynthesis. In terms of biological role, catalyzes the intramolecular cyclization of bicyclic chalcones into tricyclic (S)-flavanones. Responsible for the isomerization of 4,2',4',6'-tetrahydroxychalcone (also termed chalcone) into naringenin. The polypeptide is Chalcone--flavanone isomerase B (CHI2) (Petunia hybrida (Petunia)).